The chain runs to 43 residues: Protein PsbN (43 aa).

The helical transmembrane segment at 7–27 (VAIFISCLLVSFTGYALYTAF) threads the bilayer.

Belongs to the PsbN family.

It is found in the plastid. The protein resides in the chloroplast thylakoid membrane. Its function is as follows. May play a role in photosystem I and II biogenesis. This Huperzia lucidula (Shining clubmoss) protein is Protein PsbN.